The primary structure comprises 275 residues: Phenylalanine-4-hydroxylase (275 aa).

3 residues coordinate Fe cation: His-135, His-140, and Glu-181.

Belongs to the biopterin-dependent aromatic amino acid hydroxylase family. The cofactor is Fe(2+).

The enzyme catalyses (6R)-L-erythro-5,6,7,8-tetrahydrobiopterin + L-phenylalanine + O2 = (4aS,6R)-4a-hydroxy-L-erythro-5,6,7,8-tetrahydrobiopterin + L-tyrosine. It participates in amino-acid degradation; L-phenylalanine degradation; acetoacetate and fumarate from L-phenylalanine: step 1/6. This chain is Phenylalanine-4-hydroxylase (phhA), found in Mesorhizobium japonicum (strain LMG 29417 / CECT 9101 / MAFF 303099) (Mesorhizobium loti (strain MAFF 303099)).